Consider the following 66-residue polypeptide: Conotoxin PnMLCL-01 (66 aa).

The N-terminal stretch at 1–19 (MLCLPVFIILLLLASPAAS) is a signal peptide. Residues 20-45 (NPLEKRIQSDLIRAALEDADTKNDPR) constitute a propeptide that is removed on maturation. The residue at position 63 (Cys63) is a Cysteine amide.

This sequence belongs to the conotoxin T superfamily. Contains 2 disulfide bonds that can be either 'C1-C3, C2-C4' or 'C1-C4, C2-C3', since these disulfide connectivities have been observed for conotoxins with cysteine framework V (for examples, see AC P0DQQ7 and AC P81755). As to expression, expressed by the venom duct.

The protein localises to the secreted. The sequence is that of Conotoxin PnMLCL-01 from Conus pennaceus (Feathered cone).